Consider the following 175-residue polypeptide: Lipoprotein signal peptidase (175 aa).

Transmembrane regions (helical) follow at residues 25–45 (LWMAFALLVVVLDQFFKIVIV), 56–76 (VTGFFNLVLVYNKGAAFSFLA), 81–101 (WQRWFFTGLGIVVGAFIVWLL), and 110–130 (FCFAVSLILGGAVGNVIDRVV). Catalysis depends on residues aspartate 136 and aspartate 154. The helical transmembrane segment at 146-166 (HWPAFNVADCAITVGAVLLIV) threads the bilayer.

The protein belongs to the peptidase A8 family.

It is found in the cell inner membrane. It carries out the reaction Release of signal peptides from bacterial membrane prolipoproteins. Hydrolyzes -Xaa-Yaa-Zaa-|-(S,diacylglyceryl)Cys-, in which Xaa is hydrophobic (preferably Leu), and Yaa (Ala or Ser) and Zaa (Gly or Ala) have small, neutral side chains.. It functions in the pathway protein modification; lipoprotein biosynthesis (signal peptide cleavage). Its function is as follows. This protein specifically catalyzes the removal of signal peptides from prolipoproteins. This chain is Lipoprotein signal peptidase, found in Cupriavidus necator (strain ATCC 17699 / DSM 428 / KCTC 22496 / NCIMB 10442 / H16 / Stanier 337) (Ralstonia eutropha).